A 53-amino-acid polypeptide reads, in one-letter code: Alpha-1-antiproteinase 1 (53 aa).

The disordered stretch occupies residues 1 to 28; it reads EDLQGDAVPETSATKDDNEXPEMIPMSL.

Belongs to the serpin family. In terms of processing, N-glycosylated; contains biantennary glycans. As to expression, plasma.

It localises to the secreted. The protein is Alpha-1-antiproteinase 1 of Equus caballus (Horse).